The sequence spans 555 residues: Trehalase (555 aa).

An N-terminal signal peptide occupies residues 1-16 (MIPFLLMVAFADTVLQ). An N-linked (GlcNAc...) asparagine glycan is attached at asparagine 46. Substrate contacts are provided by residues arginine 164, 171-172 (WD), and asparagine 208. Asparagine 216 carries N-linked (GlcNAc...) asparagine glycosylation. Substrate is bound by residues 217 to 219 (RSQ), 282 to 284 (RPE), and glycine 316. Aspartate 318 acts as the Proton donor/acceptor in catalysis. Residues asparagine 334 and asparagine 371 are each glycosylated (N-linked (GlcNAc...) asparagine). Residue glutamate 516 is the Proton donor/acceptor of the active site. Glutamate 531 serves as a coordination point for substrate.

It belongs to the glycosyl hydrolase 37 family. Bean-shaped accessory glands (bags).

The protein resides in the secreted. The enzyme catalyses alpha,alpha-trehalose + H2O = alpha-D-glucose + beta-D-glucose. This chain is Trehalase, found in Tenebrio molitor (Yellow mealworm beetle).